The sequence spans 154 residues: Interleukin-7 (154 aa).

The N-terminal stretch at 1 to 25 is a signal peptide; that stretch reads MFHVSFRYIFGIPPLILVLLPVTSS. 3 disulfides stabilise this stretch: Cys27–Cys145, Cys58–Cys133, and Cys71–Cys116. N-linked (GlcNAc...) asparagine glycosylation is found at Asn94 and Asn115.

It belongs to the IL-7/IL-9 family. In terms of assembly, interacts with IL7R and CSF2RG. Post-translationally, three disulfide bonds are present.

It is found in the secreted. Hematopoietic cytokine that plays an essential role in the development, expansion, and survival of naive and memory T-cells and B-cells thereby regulating the number of mature lymphocytes and maintaining lymphoid homeostasis. Mechanistically, exerts its biological effects through a receptor composed of IL7RA subunit and the cytokine receptor common subunit gamma/CSF2RG. Binding to the receptor leads to activation of various kinases including JAK1 or JAK3 depending on the cell type and subsequently propagation of signals through activation of several downstream signaling pathways including the PI3K/Akt/mTOR or the JAK-STAT5. In Rattus norvegicus (Rat), this protein is Interleukin-7 (Il7).